Consider the following 184-residue polypeptide: MSHETGGADTAQDDEHVVLGRLTSPYGVKGWLKVYSYTSPIEGIFEHAEWVLSKRGERRACKLSQGRPHGKGLVASLEGISSRELAEQWAGADILLPKQALPALAPGDYYWYQLEGLRVETLDGECLGQVNYLFETGANDVLVIRPSEASLDERERLLPFLPDDVIRQVDLDAGRMIVDWDPEF.

In terms of domain architecture, PRC barrel spans 106-184 (PGDYYWYQLE…RMIVDWDPEF (79 aa)).

Belongs to the RimM family. In terms of assembly, binds ribosomal protein uS19.

Its subcellular location is the cytoplasm. An accessory protein needed during the final step in the assembly of 30S ribosomal subunit, possibly for assembly of the head region. Essential for efficient processing of 16S rRNA. May be needed both before and after RbfA during the maturation of 16S rRNA. It has affinity for free ribosomal 30S subunits but not for 70S ribosomes. This chain is Ribosome maturation factor RimM, found in Chromohalobacter salexigens (strain ATCC BAA-138 / DSM 3043 / CIP 106854 / NCIMB 13768 / 1H11).